The chain runs to 349 residues: Nuclear distribution protein nudE homolog 1-B (349 aa).

Residues 22–189 (VAMKYKQCSE…ELAVQQKQEK (168 aa)) adopt a coiled-coil conformation.

The protein belongs to the nudE family. In terms of assembly, self-associates. Interacts with pafah1b1. In terms of processing, phosphorylated in mitosis.

It is found in the cytoplasm. The protein localises to the cytoskeleton. Its subcellular location is the microtubule organizing center. It localises to the centrosome. The protein resides in the spindle. It is found in the chromosome. The protein localises to the centromere. Its subcellular location is the kinetochore. It localises to the cleavage furrow. The protein resides in the cytoplasmic vesicle membrane. Functionally, required for centrosome duplication and formation and function of the mitotic spindle. In Xenopus laevis (African clawed frog), this protein is Nuclear distribution protein nudE homolog 1-B (nde1-b).